The following is a 514-amino-acid chain: ATP synthase subunit alpha (514 aa).

An ATP-binding site is contributed by 170 to 177 (GDRQIGKT).

This sequence belongs to the ATPase alpha/beta chains family. F-type ATPases have 2 components, CF(1) - the catalytic core - and CF(0) - the membrane proton channel. CF(1) has five subunits: alpha(3), beta(3), gamma(1), delta(1), epsilon(1). CF(0) has three main subunits: a(1), b(2) and c(9-12). The alpha and beta chains form an alternating ring which encloses part of the gamma chain. CF(1) is attached to CF(0) by a central stalk formed by the gamma and epsilon chains, while a peripheral stalk is formed by the delta and b chains.

The protein localises to the cell inner membrane. The enzyme catalyses ATP + H2O + 4 H(+)(in) = ADP + phosphate + 5 H(+)(out). Its function is as follows. Produces ATP from ADP in the presence of a proton gradient across the membrane. The alpha chain is a regulatory subunit. In Alcanivorax borkumensis (strain ATCC 700651 / DSM 11573 / NCIMB 13689 / SK2), this protein is ATP synthase subunit alpha.